The sequence spans 278 residues: Undecaprenyl-diphosphatase (278 aa).

The next 8 helical transmembrane spans lie at 14-34 (GTTE…PWLF), 40-60 (GLAF…AYFW), 89-109 (WAVI…NDVI), 121-141 (TAIV…WLAE), 153-173 (LGLR…LPGV), 196-216 (FSFI…TLKL), 227-247 (VLFV…IAFL), and 257-277 (SIFI…VSFA).

This sequence belongs to the UppP family.

It is found in the cell membrane. It carries out the reaction di-trans,octa-cis-undecaprenyl diphosphate + H2O = di-trans,octa-cis-undecaprenyl phosphate + phosphate + H(+). Its function is as follows. Catalyzes the dephosphorylation of undecaprenyl diphosphate (UPP). Confers resistance to bacitracin. This chain is Undecaprenyl-diphosphatase, found in Thermomicrobium roseum (strain ATCC 27502 / DSM 5159 / P-2).